The following is a 333-amino-acid chain: Acyl-CoA wax alcohol acyltransferase 2 (333 aa).

Transmembrane regions (helical) follow at residues 15–35 (VFAVFQWSFSALLITTTVIAV), 38–58 (YLVVFTPYWPVTVLILTWLAF), and 130–150 (IFPGITPYILTLGAFFWMPFL).

It belongs to the diacylglycerol acyltransferase family. In terms of assembly, monomer. As to expression, highly expressed in skin, where it is primarily restricted to undifferentiated peripheral sebocytes. Also expressed at lower level in other tissues except pancreas.

The protein localises to the endoplasmic reticulum membrane. The catalysed reaction is a long chain fatty alcohol + a fatty acyl-CoA = a wax ester + CoA. It carries out the reaction all-trans-retinol + an acyl-CoA = an all-trans-retinyl ester + CoA. It catalyses the reaction an acyl-CoA + a 1,2-diacyl-sn-glycerol = a triacyl-sn-glycerol + CoA. The enzyme catalyses 11-cis-retinol + a fatty acyl-CoA = 11-cis-retinyl ester + CoA. The catalysed reaction is 9-cis-retinol + a fatty acyl-CoA = 9-cis-retinyl ester + CoA. It carries out the reaction 13-cis-retinol + a fatty acyl-CoA = 13-cis-retinyl ester + CoA. It catalyses the reaction a 1-acylglycerol + an acyl-CoA = a 1,2-diacylglycerol + CoA. The enzyme catalyses 1-O-alkylglycerol + an acyl-CoA = 1-O-alkyl-3-acylglycerol + CoA. The catalysed reaction is a 2-acylglycerol + an acyl-CoA = a 1,2-diacyl-sn-glycerol + CoA. It carries out the reaction 2-(9Z-octadecenoyl)-glycerol + hexadecanoyl-CoA = 1-hexadecanoyl-2-(9Z-octadecenoyl)-sn-glycerol + CoA. It catalyses the reaction 1,2-di-(9Z-octadecenoyl)-sn-glycerol + hexadecanoyl-CoA = 1,2-di-(9Z)-octadecenoyl-3-hexadecanoyl-sn-glycerol + CoA. The enzyme catalyses hexadecan-1-ol + hexadecanoyl-CoA = hexadecanyl hexadecanoate + CoA. The catalysed reaction is hexadecane-1,2-diol + hexadecanoyl-CoA = 2-hydroxyhexadecyl hexadecanoate + CoA. It carries out the reaction 9-cis-retinol + hexadecanoyl-CoA = 9-cis-retinyl hexadecanoate + CoA. It catalyses the reaction all-trans-retinol + hexadecanoyl-CoA = all-trans-retinyl hexadecanoate + CoA. The enzyme catalyses 1,2-di-(9Z-octadecenoyl)-sn-glycerol + (9Z)-octadecenoyl-CoA = 1,2,3-tri-(9Z-octadecenoyl)-glycerol + CoA. The catalysed reaction is hexadecan-1-ol + (9Z)-octadecenoyl-CoA = hexadecanyl (9Z)-octadecenoate + CoA. It carries out the reaction (9Z)-hexadecen-1-ol + (9Z)-octadecenoyl-CoA = 1-O-(9Z)-hexadecenyl (9Z)-octadecenoate + CoA. It catalyses the reaction octadecan-1-ol + (9Z)-octadecenoyl-CoA = 1-O-octadecyl (9Z)-octadecenoate + CoA. The enzyme catalyses (9Z)-octadecen-1-ol + (9Z)-octadecenoyl-CoA = 1-O-(9Z)-octadecenyl (9Z)-octadecenoate + CoA. The catalysed reaction is hexadecan-1-ol + (9Z)-hexadecenoyl-CoA = 1-O-hexadecyl (9Z)-hexadecenoate + CoA. It carries out the reaction hexadecan-1-ol + octadecanoyl-CoA = hexadecanyl octadecanoate + CoA. It catalyses the reaction 11-cis-retinol + hexadecanoyl-CoA = 11-cis-retinyl hexadecanoate + CoA. The enzyme catalyses 1-O-(9Z-octadecenyl)-glycerol + (9Z)-octadecenoyl-CoA = 1-O-(9Z-octadecyl)-3-(9Z-octadecenoyl)-glycerol + CoA. The catalysed reaction is 1-(9Z-octadecenoyl)-glycerol + (9Z)-octadecenoyl-CoA = 1,2-di-(9Z-octadecenoyl)-glycerol + CoA. It carries out the reaction 11-cis-retinol + tetradecanoyl-CoA = 11-cis-retinyl tetradecanoate + CoA. It catalyses the reaction 9-cis-retinol + tetradecanoyl-CoA = 9-cis-retinyl tetradecanoate + CoA. The enzyme catalyses 13-cis-retinol + tetradecanoyl-CoA = 13-cis-retinyl tetradecanoate + CoA. The catalysed reaction is all-trans-retinol + tetradecanoyl-CoA = all-trans-retinyl tetradecanoate + CoA. It carries out the reaction tetradecan-1-ol + tetradecanoyl-CoA = tetradecanyl tetradecanoate + CoA. Its activity is regulated as follows. 11-cis retinoids act as allosteric modulators of acyl-CoA retinol O-fatty-acyltransferase (ARAT) activity by suppressing esterification of 9-cis, 13-cis, or all-trans retinols concurrently increasing the enzyme specificity toward 11-cis isomer. In terms of biological role, acyltransferase that catalyzes the formation of ester bonds between fatty alcohols and fatty acyl-CoAs to form wax monoesters. Shows a preference for medium chain acyl-CoAs from C12 to C16 in length and fatty alcohols shorter than C20, as the acyl donors and acceptors, respectively. Also possesses acyl-CoA retinol acyltransferase (ARAT) activity that preferentially esterifies 11-cis-retinol, a chromophore precursor of bleached opsin pigments in cone cells. Shows higher catalytic efficiency toward 11-cis-retinol versus 9-cis-retinol, 13-cis-retinol, and all-trans-retinol substrates. This chain is Acyl-CoA wax alcohol acyltransferase 2 (AWAT2), found in Homo sapiens (Human).